Here is a 1377-residue protein sequence, read N- to C-terminus: ATP-dependent helicase/nuclease subunit A (1377 aa).

The UvrD-like helicase ATP-binding domain maps to 4 to 478; that stretch reads TSWTPGQQKV…IDLSKNFRSR (475 aa). 25–32 lines the ATP pocket; that stretch reads AAAGSGKT. The region spanning 526–867 is the UvrD-like helicase C-terminal domain; the sequence is FLFSDTKTEL…RIMSIHKSKG (342 aa). Positions 1036 to 1065 are enriched in acidic residues; that stretch reads FEEESDEQSDEERSDEERSDGEQSDGEQSD. A disordered region spans residues 1036–1072; it reads FEEESDEQSDEERSDEERSDGEQSDGEQSDGEQPRKD.

The protein belongs to the helicase family. AddA subfamily. As to quaternary structure, heterodimer of AddA and AddB/RexB. Requires Mg(2+) as cofactor.

It catalyses the reaction Couples ATP hydrolysis with the unwinding of duplex DNA by translocating in the 3'-5' direction.. The catalysed reaction is ATP + H2O = ADP + phosphate + H(+). Functionally, the heterodimer acts as both an ATP-dependent DNA helicase and an ATP-dependent, dual-direction single-stranded exonuclease. Recognizes the chi site generating a DNA molecule suitable for the initiation of homologous recombination. The AddA nuclease domain is required for chi fragment generation; this subunit has the helicase and 3' -&gt; 5' nuclease activities. The protein is ATP-dependent helicase/nuclease subunit A of Lachnoclostridium phytofermentans (strain ATCC 700394 / DSM 18823 / ISDg) (Clostridium phytofermentans).